The following is a 473-amino-acid chain: N-lysine methyltransferase SETD6 (473 aa).

The segment at 1-23 is disordered; sequence MAAPAKRARVSGGSPLVAPCPSP. Serine 14 and serine 22 each carry phosphoserine. Positions 62–286 constitute an SET domain; it reads PKVTVSRQGT…EGHEIFNTYG (225 aa). Position 63 is an N6-methylated lysine; by autocatalysis (lysine 63). 73-75 is an S-adenosyl-L-methionine binding site; it reads AGY. Tryptophan 122 contacts substrate. The residue at position 179 (lysine 179) is an N6-methylated lysine; by autocatalysis. Tyrosine 223 is an S-adenosyl-L-methionine binding site. Residues serine 224 and glutamine 226 each contribute to the substrate site. Residues 251–252 and tyrosine 297 each bind S-adenosyl-L-methionine; that span reads NH. At lysine 372 the chain carries N6-methylated lysine; by autocatalysis.

Belongs to the class V-like SAM-binding methyltransferase superfamily. Histone-lysine methyltransferase family. SETD6 subfamily. In terms of assembly, monomer, homodimer and homotrimer; these structures are stabilized in the presence of S-adenosyl-L-methionine (SAM). In terms of processing, automethylated.

It is found in the nucleus. It catalyses the reaction L-lysyl-[protein] + S-adenosyl-L-methionine = N(6)-methyl-L-lysyl-[protein] + S-adenosyl-L-homocysteine + H(+). The catalysed reaction is L-lysyl(8)-[histone H2AZ] + S-adenosyl-L-methionine = N(6)-methyl-L-lysyl(8)-[histone H2AZ] + S-adenosyl-L-homocysteine + H(+). In terms of biological role, protein-lysine N-methyltransferase. Monomethylates 'Lys-310' of the RELA subunit of NF-kappa-B complex, leading to down-regulation of NF-kappa-B transcription factor activity. Monomethylates 'Lys-8' of H2AZ (H2AZK8me1). Required for the maintenance of embryonic stem cell self-renewal. Methylates PAK4. This is N-lysine methyltransferase SETD6 (Setd6) from Mus musculus (Mouse).